A 500-amino-acid polypeptide reads, in one-letter code: Aldehyde dehydrogenase (500 aa).

246–251 (GSTLVG) serves as a coordination point for NAD(+). Glutamate 269 (proton acceptor) is an active-site residue. Cysteine 303 (nucleophile) is an active-site residue.

Belongs to the aldehyde dehydrogenase family.

It catalyses the reaction an aldehyde + NAD(+) + H2O = a carboxylate + NADH + 2 H(+). The protein operates within alcohol metabolism; ethanol degradation; acetate from ethanol: step 2/2. This Agaricus bisporus (White button mushroom) protein is Aldehyde dehydrogenase (aldA).